Reading from the N-terminus, the 262-residue chain is MSDILEKILATKRAEVAAGLARVPLAEMRARAEAAAPARDFVGALRAKRDAGRPAVIAEIKKASPSKGVIRADFRPAEIAASYEKGGAACLSILTDAEYFQGSADYLKAARAACTLPVLRKDFMIDAYQVYEARAMGADCILLIVAALELPAMQALEALANELGMAVLVESHDAAELDAALTLRTPLQGINNRNLRTFEVSLDTTLSLLPKIGPERIVVTESGILAPADVDTMRSRGVNTFLVGEAFMRAADPGAELARLFA.

This sequence belongs to the TrpC family.

The enzyme catalyses 1-(2-carboxyphenylamino)-1-deoxy-D-ribulose 5-phosphate + H(+) = (1S,2R)-1-C-(indol-3-yl)glycerol 3-phosphate + CO2 + H2O. Its pathway is amino-acid biosynthesis; L-tryptophan biosynthesis; L-tryptophan from chorismate: step 4/5. The protein is Indole-3-glycerol phosphate synthase of Thiobacillus denitrificans (strain ATCC 25259 / T1).